A 453-amino-acid chain; its full sequence is Keratin, type I cytoskeletal 15 (453 aa).

The segment at 1–102 is head; sequence MATTLLQTSS…GGDGGLLSGN (102 aa). Phosphoserine is present on residues serine 16, serine 17, serine 34, serine 48, and serine 56. The tract at residues 103–138 is coil 1A; sequence EKITMQNLNDRLASYLEKVRALEEANADLEVKIRDW. The region spanning 103-415 is the IF rod domain; sequence EKITMQNLND…SLLEGQDARM (313 aa). Positions 139 to 157 are linker 1; that stretch reads YQRQSPTSPERDYSPYFKT. The tract at residues 158-249 is coil 1B; the sequence is TDELRDKILA…KNHEEEMKEF (92 aa). The tract at residues 250–269 is linker 12; the sequence is SNQLAGQVNVEMDAAPGVDL. The coil 2 stretch occupies residues 270–411; sequence TRVLSEMREQ…ATYHSLLEGQ (142 aa). Residue lysine 298 forms a Glycyl lysine isopeptide (Lys-Gly) (interchain with G-Cter in SUMO2) linkage. 2 positions are modified to phosphothreonine: threonine 299 and threonine 321. Positions 412-453 are tail; the sequence is DARMAGIGTGEASLGGGGGGKVRINVEESVDGKVVSSRKREI. Residue lysine 444 forms a Glycyl lysine isopeptide (Lys-Gly) (interchain with G-Cter in SUMO1); alternate linkage. Lysine 444 participates in a covalent cross-link: Glycyl lysine isopeptide (Lys-Gly) (interchain with G-Cter in SUMO2); alternate.

Belongs to the intermediate filament family. In terms of assembly, heterotetramer of two type I and two type II keratins. Interacts with NOD2. In terms of tissue distribution, expressed in the basal cell layers of several stratified epithelia including esophagus, tongue, stomach, epidermis and hair follicle. In the hair follicle, expression is detected mainly in the basal layer of the outer root sheath (ORS), except just above the follicle bulb where it occurs throughout its thickness. Low expression levels are seen in the single layer of ORS cells around the base of the follicle which increases in the palisade-like cells of the bulb. Also expressed in the basal cells of the sebaceous glands, and expression in the epidermis occurs in a punctate pattern.

In Ovis aries (Sheep), this protein is Keratin, type I cytoskeletal 15.